A 501-amino-acid chain; its full sequence is 2,3-bisphosphoglycerate-independent phosphoglycerate mutase (501 aa).

Mn(2+) contacts are provided by D12 and S62. Residue S62 is the Phosphoserine intermediate of the active site. Substrate contacts are provided by residues H121, 150 to 151 (RD), R182, R188, 253 to 256 (RSDR), and K322. Residues D389, H393, D430, H431, and H449 each coordinate Mn(2+).

The protein belongs to the BPG-independent phosphoglycerate mutase family. In terms of assembly, monomer. The cofactor is Mn(2+).

The enzyme catalyses (2R)-2-phosphoglycerate = (2R)-3-phosphoglycerate. The protein operates within carbohydrate degradation; glycolysis; pyruvate from D-glyceraldehyde 3-phosphate: step 3/5. Catalyzes the interconversion of 2-phosphoglycerate and 3-phosphoglycerate. This chain is 2,3-bisphosphoglycerate-independent phosphoglycerate mutase, found in Ehrlichia ruminantium (strain Welgevonden).